The chain runs to 117 residues: NADH dehydrogenase [ubiquinone] 1 beta subcomplex subunit 9 (117 aa).

The residue at position 2 (serine 2) is an N-acetylserine.

Belongs to the complex I LYR family. In terms of assembly, complex I is composed of at least 49 different subunits. In terms of tissue distribution, expressed in roots, stems, flowers, rosette leaves, cauline leaves and siliques, with the highest expression in the stems.

Its subcellular location is the mitochondrion inner membrane. Accessory subunit of the mitochondrial membrane respiratory chain NADH dehydrogenase (Complex I), that is believed to be not involved in catalysis. Complex I functions in the transfer of electrons from NADH to the respiratory chain. The immediate electron acceptor for the enzyme is believed to be ubiquinone. Is required for correct plant growth and development. This is NADH dehydrogenase [ubiquinone] 1 beta subcomplex subunit 9 (CIB22) from Arabidopsis thaliana (Mouse-ear cress).